The sequence spans 360 residues: Phospho-N-acetylmuramoyl-pentapeptide-transferase (360 aa).

10 helical membrane-spanning segments follow: residues 25–45, 74–94, 97–117, 134–154, 168–188, 199–219, 236–256, 263–283, 288–308, and 339–359; these read RAILSVLTALGISLLLGPWVI, MGGALILSAMFISTLLWSDFG, YVWVVLIVTAIFGAVGWVDDY, YFWQSIAGFGAAVFLFCTAQA, VALNMGLFYIIFTYFVIVGTS, GLAIMPSVMVAGALALIAYLA, AGELAVFCCALVGAGLGFLWF, VFMGDVGALALGAALGLVAVI, FVLFIMGGIFVLETVSVILQV, and IVRFWIITLVLVLIGLATLKF.

The protein belongs to the glycosyltransferase 4 family. MraY subfamily. It depends on Mg(2+) as a cofactor.

It localises to the cell inner membrane. It carries out the reaction UDP-N-acetyl-alpha-D-muramoyl-L-alanyl-gamma-D-glutamyl-meso-2,6-diaminopimeloyl-D-alanyl-D-alanine + di-trans,octa-cis-undecaprenyl phosphate = di-trans,octa-cis-undecaprenyl diphospho-N-acetyl-alpha-D-muramoyl-L-alanyl-D-glutamyl-meso-2,6-diaminopimeloyl-D-alanyl-D-alanine + UMP. The protein operates within cell wall biogenesis; peptidoglycan biosynthesis. In terms of biological role, catalyzes the initial step of the lipid cycle reactions in the biosynthesis of the cell wall peptidoglycan: transfers peptidoglycan precursor phospho-MurNAc-pentapeptide from UDP-MurNAc-pentapeptide onto the lipid carrier undecaprenyl phosphate, yielding undecaprenyl-pyrophosphoryl-MurNAc-pentapeptide, known as lipid I. The polypeptide is Phospho-N-acetylmuramoyl-pentapeptide-transferase (Cellvibrio japonicus (strain Ueda107) (Pseudomonas fluorescens subsp. cellulosa)).